A 271-amino-acid polypeptide reads, in one-letter code: Shikimate dehydrogenase (NADP(+)) (271 aa).

Residues 14–16 and threonine 61 each bind shikimate; that span reads SRS. Lysine 65 serves as the catalytic Proton acceptor. 2 residues coordinate shikimate: asparagine 86 and aspartate 102. Residues 126 to 130, 149 to 154, and methionine 213 each bind NADP(+); these read GAGGA and NRTFSR. Tyrosine 215 lines the shikimate pocket. An NADP(+)-binding site is contributed by glycine 238.

Belongs to the shikimate dehydrogenase family. As to quaternary structure, homodimer.

The enzyme catalyses shikimate + NADP(+) = 3-dehydroshikimate + NADPH + H(+). Its pathway is metabolic intermediate biosynthesis; chorismate biosynthesis; chorismate from D-erythrose 4-phosphate and phosphoenolpyruvate: step 4/7. Involved in the biosynthesis of the chorismate, which leads to the biosynthesis of aromatic amino acids. Catalyzes the reversible NADPH linked reduction of 3-dehydroshikimate (DHSA) to yield shikimate (SA). The protein is Shikimate dehydrogenase (NADP(+)) of Histophilus somni (strain 129Pt) (Haemophilus somnus).